The primary structure comprises 239 residues: Carboxy-S-adenosyl-L-methionine synthase (239 aa).

S-adenosyl-L-methionine is bound by residues Tyr-35, 64-66 (GCS), 88-89 (DN), and Arg-195.

It belongs to the class I-like SAM-binding methyltransferase superfamily. Cx-SAM synthase family. As to quaternary structure, homodimer.

The enzyme catalyses prephenate + S-adenosyl-L-methionine = carboxy-S-adenosyl-L-methionine + 3-phenylpyruvate + H2O. Catalyzes the conversion of S-adenosyl-L-methionine (SAM) to carboxy-S-adenosyl-L-methionine (Cx-SAM). This chain is Carboxy-S-adenosyl-L-methionine synthase, found in Helicobacter pylori (strain Shi470).